The primary structure comprises 58 residues: Large ribosomal subunit protein uL30 (58 aa).

It belongs to the universal ribosomal protein uL30 family. As to quaternary structure, part of the 50S ribosomal subunit.

The protein is Large ribosomal subunit protein uL30 of Trichlorobacter lovleyi (strain ATCC BAA-1151 / DSM 17278 / SZ) (Geobacter lovleyi).